Here is a 513-residue protein sequence, read N- to C-terminus: Gluconokinase (513 aa).

Residues Lys-16, Thr-261, Gly-300, and 412-416 (GFARS) each bind ATP.

This sequence belongs to the FGGY kinase family.

The catalysed reaction is D-gluconate + ATP = 6-phospho-D-gluconate + ADP + H(+). The protein operates within carbohydrate acid metabolism; D-gluconate degradation. Catabolite repression by gluconate. The sequence is that of Gluconokinase (gntK) from Bacillus subtilis (strain 168).